The primary structure comprises 98 residues: Thrombin-like enzyme cerastotin (98 aa).

One can recognise a Peptidase S1 domain in the interval 1 to 98 (VIGGAECNIN…IKKPVNGSTH (98 aa)). Active-site charge relay system residues include histidine 41 and aspartate 85. N-linked (GlcNAc...) asparagine glycosylation occurs at asparagine 94.

This sequence belongs to the peptidase S1 family. Snake venom subfamily. Monomer. In terms of tissue distribution, expressed by the venom gland.

The protein localises to the secreted. With respect to regulation, inhibited by PMSF. Functionally, thrombin-like snake venom serine protease that preferentially cleaves the alpha-chain of fibrinogen (FGA). Induce platelet aggregation in the presence of exogenous fibrinogen. Possesses esterase and amidolytic activities. The polypeptide is Thrombin-like enzyme cerastotin (Cerastes cerastes (Horned desert viper)).